A 288-amino-acid chain; its full sequence is ATP synthase gamma chain (288 aa).

The protein belongs to the ATPase gamma chain family. As to quaternary structure, F-type ATPases have 2 components, CF(1) - the catalytic core - and CF(0) - the membrane proton channel. CF(1) has five subunits: alpha(3), beta(3), gamma(1), delta(1), epsilon(1). CF(0) has three main subunits: a, b and c.

Its subcellular location is the cell inner membrane. Functionally, produces ATP from ADP in the presence of a proton gradient across the membrane. The gamma chain is believed to be important in regulating ATPase activity and the flow of protons through the CF(0) complex. In Rickettsia felis (strain ATCC VR-1525 / URRWXCal2) (Rickettsia azadi), this protein is ATP synthase gamma chain.